A 127-amino-acid chain; its full sequence is Holo-[acyl-carrier-protein] synthase (127 aa).

The Mg(2+) site is built by aspartate 9 and glutamate 58.

The protein belongs to the P-Pant transferase superfamily. AcpS family. Mg(2+) is required as a cofactor.

The protein localises to the cytoplasm. It catalyses the reaction apo-[ACP] + CoA = holo-[ACP] + adenosine 3',5'-bisphosphate + H(+). Transfers the 4'-phosphopantetheine moiety from coenzyme A to a Ser of acyl-carrier-protein. In Shewanella sp. (strain W3-18-1), this protein is Holo-[acyl-carrier-protein] synthase.